We begin with the raw amino-acid sequence, 142 residues long: Hemoglobin subunit epsilon (142 aa).

Residues 3–142 (HFTAEEKAAI…KLVSAVAIAL (140 aa)) form the Globin domain. Residues serine 14 and serine 51 each carry the phosphoserine modification. Heme b is bound by residues histidine 64 and histidine 93.

This sequence belongs to the globin family. Heterotetramer of two alpha chains and two epsilon chains in early embryonic hemoglobin Gower-2; two zeta chains and two epsilon chains in early embryonic hemoglobin Gower-1. In terms of tissue distribution, red blood cells.

Functionally, the epsilon chain is a beta-type chain of early mammalian embryonic hemoglobin. The protein is Hemoglobin subunit epsilon (HBE1) of Callithrix geoffroyi (Geoffroy's marmoset).